An 80-amino-acid polypeptide reads, in one-letter code: Protein CEBPZOS (80 aa).

A helical transmembrane segment spans residues 15-32; sequence GVLVAELVGVFGAYFLFS.

The protein resides in the mitochondrion membrane. In Homo sapiens (Human), this protein is Protein CEBPZOS.